Consider the following 279-residue polypeptide: Membrane protein insertase YidC (279 aa).

The first 22 residues, 1-22, serve as a signal peptide directing secretion; it reads MKHLKRNMALLSVAALSFILTA. Cysteine 23 is lipidated: N-palmitoyl cysteine. The S-diacylglycerol cysteine moiety is linked to residue cysteine 23. Transmembrane regions (helical) follow at residues 35-55, 59-79, 129-149, 170-190, and 210-230; these read IWDG…SKLF, YGWG…PLMI, MAGC…YAAV, PYFI…WLSM, and PLVI…YWVV. Over residues 253–268 the composition is skewed to basic and acidic residues; sequence EEKIQTEKAKRKAIEK. The tract at residues 253–279 is disordered; sequence EEKIQTEKAKRKAIEKAKRRAMKSKRK. Basic residues predominate over residues 269–279; it reads AKRRAMKSKRK.

Belongs to the OXA1/ALB3/YidC family. Type 2 subfamily.

The protein localises to the cell membrane. Functionally, required for the insertion and/or proper folding and/or complex formation of integral membrane proteins into the membrane. Involved in integration of membrane proteins that insert both dependently and independently of the Sec translocase complex, as well as at least some lipoproteins. In Pediococcus pentosaceus (strain ATCC 25745 / CCUG 21536 / LMG 10740 / 183-1w), this protein is Membrane protein insertase YidC.